Reading from the N-terminus, the 351-residue chain is Basic salivary proline-rich protein 3 (351 aa).

The first 16 residues, Met1 to Ala16, serve as a signal peptide directing secretion. Pyrrolidone carboxylic acid is present on Gln17. Positions Gln17–Gln351 are disordered. Polar residues predominate over residues Asn20–Val31. Phosphoserine is present on Ser24. 12 repeat units span residues Pro53–Pro73, Arg74–Pro94, Arg95–Pro115, Arg116–Pro136, Arg137–Pro157, Arg158–Pro178, His179–Pro199, Arg200–Pro220, Arg221–Pro241, Arg242–Pro261, Arg263–Pro283, and His284–Pro304. The interval Pro53–Pro304 is 12 X 21 AA tandem repeats of [RHP]-P-G-K-P-[EQ]-G-[PQS]-P-[PS]-Q-[GE]-G-N-[QK]-[SP]-[QR]-[GR]-P-P-P. Residue Asn66 is glycosylated (N-linked (GlcNAc...) asparagine). Residues Gly70–Gln84 are compositionally biased toward pro residues. The N-linked (GlcNAc...) asparagine glycan is linked to Asn87. Ser89 is a glycosylation site (O-linked (Hex) serine). The segment covering Pro99–Gln111 has biased composition (low complexity). The N-linked (GlcNAc...) asparagine glycan is linked to Asn108. Pro residues predominate over residues Gly112–Gln126. The N-linked (GlcNAc...) asparagine glycan is linked to Asn129. Residues Gly133–Gln147 show a composition bias toward pro residues. Residue Asn150 is glycosylated (N-linked (GlcNAc...) asparagine). 2 stretches are compositionally biased toward pro residues: residues Gly154–Gln168 and Gly175–Gln189. Asn192 is a glycosylation site (N-linked (GlcNAc...) asparagine). Residues Gly196–Gln210 are compositionally biased toward pro residues. Asn213 and Asn234 each carry an N-linked (GlcNAc...) asparagine glycan. 3 stretches are compositionally biased toward pro residues: residues Gly217–Gln252, Gly259–Pro270, and Gln279–Gln351. Residue Asn297 is glycosylated (N-linked (Hex) asparagine; atypical).

N- and O-glycosylated; contains about 50% carbohydrate. This is composed of highly fucosylated N-linked saccharides, the major structure is a biantennary asialosaccharide containing 2 fucose residues on one antenna and an unsubstituted terminal lactosamine sequence on the other. The Gram-negative bacterium F.nucleatum binds to carbohydrates containing unsubstituted GalBeta1,4GlcNAc residues. N-glycosylation on Asn-87 is prevalent in head and neck cancer patients. Post-translationally, proteolytically cleaved at the tripeptide Xaa-Pro-Gln, where Xaa in the P(3) position is mostly lysine. The endoprotease may be of microbial origin. Besides on the N-terminal of mature PRB3, pyroglutamate formation found on at least Gln-67, Gln-88, Gln-256 and Gln-337.

It is found in the secreted. Functionally, acts as a receptor for the Gram-negative bacterium F.nucleatum. This is Basic salivary proline-rich protein 3 (PRB3) from Homo sapiens (Human).